The sequence spans 505 residues: MEELQGYLGIDRSCQQRFLYPLLFQESIYALAHDYGLNGSILYEPIENLGYDNKPSLLIVKRLIIRMHQQNLFFILVNGSNQNRFVGHNRSFYSQMISEGFAGIVEIPLSMRLASSLEQIAKSHNLRSIHSIFPFLEDKFSHLNHVSDILIPHPVHLEILVQTLRRWIQDAPSLHLLRFFLHGHPNWNSLITPKKSISLFSKENPRFFLFLYNSYVYEYESILVFLHKQSSHLRSISSGAFLERTNFYGKTEHLLVVLRNDFQKTLWLWLFKDPFMHYARYQGKAIMASKGTHLLMKKWKYHLVNFWQLHFYLWSQSGRIRINELSNHFFYFPGYLSGIRLNPSVVRGQMIENSFMIDTGIKKFDMIVPIIPLIGSLVKAKFCNISGYPISKSVRADSSNSDIINRFGRICRNLSHYHSGSSKKHNLYRIKYILRLSCAKTLARKHKSTVRTILKRLGSELLEEFLTEKEEILSLISPRTSSPPHREEGIWYLDIIHIHGMSNHS.

The protein belongs to the intron maturase 2 family. MatK subfamily.

It is found in the plastid. It localises to the chloroplast. Functionally, usually encoded in the trnK tRNA gene intron. Probably assists in splicing its own and other chloroplast group II introns. In Illicium oligandrum (Star anise), this protein is Maturase K.